The chain runs to 461 residues: Protein IQ-DOMAIN 2 (461 aa).

The disordered stretch occupies residues 1 to 55 (MGKKAKWFSSVKKAFSPDSKKSKQKLAEGQNGVISNPPVVDNVRQSSSSPPPALA). Residues 114–142 (EEAAAILIQTIFRGYLARRALRAMRGLVR) form the IQ domain. The tract at residues 141 to 158 (VRLKLLMEGSVVKRQAAN) is calmodulin-binding. The segment at 278-461 (PLESSEKEQS…GVTVTNGAGS (184 aa)) is disordered. Residues 310 to 345 (LTRNGSTQPNTPSSARGTPRNKNSFFSPPTPSRLNQ) are compositionally biased toward polar residues. Positions 425–432 (KKRLSYPT) match the Nuclear localization signal motif.

It belongs to the IQD family. As to quaternary structure, binds to multiple calmodulin (CaM) in the presence of Ca(2+) and CaM-like proteins.

It localises to the nucleus. Its subcellular location is the cytoplasm. The protein resides in the cytoskeleton. In terms of biological role, may be involved in cooperative interactions with calmodulins or calmodulin-like proteins. Recruits calmodulin proteins to microtubules, thus being a potential scaffold in cellular signaling and trafficking. May associate with nucleic acids and regulate gene expression at the transcriptional or post-transcriptional level. The chain is Protein IQ-DOMAIN 2 from Arabidopsis thaliana (Mouse-ear cress).